Reading from the N-terminus, the 365-residue chain is MNITNCTTDASMVVRPKTVTEKMLICMTLVIITTLTMLLNSAVIMAICTTKKLHQPANYLICSLAVTDLLVAVLVMPLSIMYIVMDSWRLGYFICEVWLSVDMTCCTCSILHLCVIALDRYWAITNAIEYARKRTAKRAGLMILTVWTISIFISMPPLFWRSHRQLSPPPSQCTIQHDHVIYTIYSTFGAFYIPLTLILILYYRIYHAAKSLYQKRGSSRHLSNRSTDSQNSFASCKLTQTFCVSDFSTSDPTTEFEKIHASIRIPPFDNDLDHPGERQQISSTRERKAARILGLILGAFILSWLPFFIKELIVGLSIYTVSSEVGDFLTWLGYVNSLINPLLYTSFNEDFKLAFKKLIRCREHT.

At 1–22 (MNITNCTTDASMVVRPKTVTEK) the chain is on the extracellular side. N-linked (GlcNAc...) asparagine glycans are attached at residues N2 and N5. Residues 23–47 (MLICMTLVIITTLTMLLNSAVIMAI) form a helical membrane-spanning segment. At 48–59 (CTTKKLHQPANY) the chain is on the cytoplasmic side. A helical transmembrane segment spans residues 60–82 (LICSLAVTDLLVAVLVMPLSIMY). The Extracellular portion of the chain corresponds to 83–96 (IVMDSWRLGYFICE). A disulfide bridge connects residues C95 and C173. Residues 97 to 118 (VWLSVDMTCCTCSILHLCVIAL) traverse the membrane as a helical segment. 2 residues coordinate ergotamine: D102 and T107. Positions 119–121 (DRY) match the DRY motif; important for ligand-induced conformation changes motif. Topologically, residues 119-138 (DRYWAITNAIEYARKRTAKR) are cytoplasmic. The helical transmembrane segment at 139–160 (AGLMILTVWTISIFISMPPLFW) threads the bilayer. The Extracellular segment spans residues 161 to 179 (RSHRQLSPPPSQCTIQHDH). I175 serves as a coordination point for ergotamine. The chain crosses the membrane as a helical span at residues 180–202 (VIYTIYSTFGAFYIPLTLILILY). The Cytoplasmic segment spans residues 203 to 291 (YRIYHAAKSL…SSTRERKAAR (89 aa)). A helical transmembrane segment spans residues 292–314 (ILGLILGAFILSWLPFFIKELIV). At 315-324 (GLSIYTVSSE) the chain is on the extracellular side. Residues 325–347 (VGDFLTWLGYVNSLINPLLYTSF) form a helical membrane-spanning segment. The NPxxY motif; important for ligand-induced conformation changes and signaling signature appears at 340-344 (NPLLY). The Cytoplasmic portion of the chain corresponds to 348–365 (NEDFKLAFKKLIRCREHT).

Belongs to the G-protein coupled receptor 1 family. Detected in the brain with the greatest abundance in the hippocampus, followed by the olfactory bulb. Lower levels are detected in the cortex, thalamus, pons, hypothalamus, midbrain, striatum, and cerebellum.

It is found in the cell membrane. Functionally, G-protein coupled receptor for 5-hydroxytryptamine (serotonin). Also functions as a receptor for various alkaloids and psychoactive substances. Ligand binding causes a conformation change that triggers signaling via guanine nucleotide-binding proteins (G proteins) and modulates the activity of down-stream effectors, such as adenylate cyclase. Signaling inhibits adenylate cyclase activity. This chain is 5-hydroxytryptamine receptor 1E (5HT1E), found in Cavia porcellus (Guinea pig).